The following is an 815-amino-acid chain: Cell division cycle protein 48 (815 aa).

Residues 1–30 (MNAPSTMTDKKPEVEHLQGENPPKDTYSAE) form a disordered region. The segment covering 8 to 18 (TDKKPEVEHLQ) has biased composition (basic and acidic residues). ATP-binding positions include 267–273 (PGTGKTL), asparagine 368, histidine 404, and 541–546 (GTGKTL). A disordered region spans residues 794–815 (DSADSNTNGPSFGNDGADDLYA). A compositionally biased stretch (polar residues) spans 795 to 804 (SADSNTNGPS).

It belongs to the AAA ATPase family. As to quaternary structure, component of the ribosome quality control complex (RQC), composed of the E3 ubiquitin ligase rkr1/ltn1, rqc1 and mtr1/rqc2, as well as cdc48 and its ubiquitin-binding cofactors. RQC forms a stable complex with 60S ribosomal subunits. Interacts with ubx2 and ubx3. Interacts with lub1. Interacts with rbd2 (via C-terminal SHP box); the interaction is required for rbd2-mediated cleavage of sre1 and sre2.

The protein localises to the cytoplasm. The protein resides in the nucleus. The catalysed reaction is ATP + H2O = ADP + phosphate + H(+). The first ATP-binding region has low ATPase activity. The second ATP-binding region is responsible for ATPase activity. ATP binding to the first ATP-binding region induces intrinsic activity of the second ATP-binding region. While ATP binding to the first ATP-binding region appears to prevent ATP hydrolysis by the second ATP-binding region, ADP-binding to first region promotes the coordinate and cooperative ATPase cycle of the second ATP-binding region. ATP binding to the first ATP-binding region induces a conformational change, promoting the rotation of the first ATP-binding region relative to the second ATP-binding region in the hexamer. In terms of biological role, ATP-dependent chaperone which probably uses the energy provided by ATP hydrolysis to generate mechanical force to unfold substrate proteins, disassemble protein complexes, and disaggregate protein aggregates. By recruiting and promoting the degradation of ubiquitinated proteins, plays a role in the ubiquitin fusion degradation (UFD) pathway. Has a role in the endoplasmic reticulum-associated degradation (ERAD) pathway which mediates the cytoplasmic elimination of misfolded proteins exported from the ER. Involved in spindle disassembly. Component of the ribosome quality control complex (RQC), a ribosome-associated complex that mediates ubiquitination and extraction of incompletely synthesized nascent chains for proteasomal degradation. CDC48 may provide the mechanical force that dislodges the polyubiquitinated nascent peptides from the exit channel. Required for ribophagy, a process which relocalizes ribosomal particles into the vacuole for degradation in response to starvation. Has a role in substrate recognition mediating rbd2-dependent cleavage of sterol regulatory element-binding protein sre1 and sre2. The chain is Cell division cycle protein 48 from Schizosaccharomyces pombe (strain 972 / ATCC 24843) (Fission yeast).